A 901-amino-acid polypeptide reads, in one-letter code: HTH-type transcriptional regulator MalT (901 aa).

Position 39 to 46 (39 to 46 (SPAGYGKT)) interacts with ATP. In terms of domain architecture, HTH luxR-type spans 829-894 (ELIRTSPLTQ…AAVQHAQKLL (66 aa)). The segment at residues 853 to 872 (NEQIAGELEVAATTIKTHIR) is a DNA-binding region (H-T-H motif).

It belongs to the MalT family. As to quaternary structure, monomer in solution. Oligomerizes to an active state in the presence of the positive effectors ATP and maltotriose.

Activated by ATP and maltotriose, which are both required for DNA binding. Positively regulates the transcription of the maltose regulon whose gene products are responsible for uptake and catabolism of malto-oligosaccharides. Specifically binds to the promoter region of its target genes, recognizing a short DNA motif called the MalT box. The polypeptide is HTH-type transcriptional regulator MalT (Escherichia coli O6:H1 (strain CFT073 / ATCC 700928 / UPEC)).